Reading from the N-terminus, the 919-residue chain is Isoleucine--tRNA ligase (919 aa).

A 'HIGH' region motif is present at residues 57-67; that stretch reads PYANGDIHMGT. Position 552 (glutamate 552) interacts with L-isoleucyl-5'-AMP. The 'KMSKS' region motif lies at 593–597; sequence KMSKS. Residue lysine 596 participates in ATP binding. Positions 886, 889, 906, and 909 each coordinate Zn(2+).

The protein belongs to the class-I aminoacyl-tRNA synthetase family. IleS type 1 subfamily. Monomer. Zn(2+) serves as cofactor.

Its subcellular location is the cytoplasm. The enzyme catalyses tRNA(Ile) + L-isoleucine + ATP = L-isoleucyl-tRNA(Ile) + AMP + diphosphate. Catalyzes the attachment of isoleucine to tRNA(Ile). As IleRS can inadvertently accommodate and process structurally similar amino acids such as valine, to avoid such errors it has two additional distinct tRNA(Ile)-dependent editing activities. One activity is designated as 'pretransfer' editing and involves the hydrolysis of activated Val-AMP. The other activity is designated 'posttransfer' editing and involves deacylation of mischarged Val-tRNA(Ile). The polypeptide is Isoleucine--tRNA ligase (Petrotoga mobilis (strain DSM 10674 / SJ95)).